We begin with the raw amino-acid sequence, 499 residues long: Alpha-amylase A type-1/2 (499 aa).

The signal sequence occupies residues 1 to 21 (MMVAWWSLFLYGLQVAAPALA). Cys51 and Cys59 are joined by a disulfide. The substrate site is built by Gln56 and Trp104. Asn142 is a binding site for Ca(2+). Residue His143 coordinates substrate. The cysteines at positions 171 and 185 are disulfide-linked. Ca(2+) contacts are provided by Glu183 and Asp196. Asn218 carries N-linked (GlcNAc...) asparagine glycosylation. Arg225 lines the substrate pocket. The Ca(2+) site is built by Asp227, His231, and Glu251. Asp227 (nucleophile) is an active-site residue. A substrate-binding site is contributed by 230-231 (KH). Glu251 functions as the Proton donor in the catalytic mechanism. Gly255 is a substrate binding site. The cysteines at positions 261 and 304 are disulfide-linked. Substrate is bound by residues Asp318 and Arg365. An intrachain disulfide couples Cys461 to Cys496.

The protein belongs to the glycosyl hydrolase 13 family. Monomer. It depends on Ca(2+) as a cofactor.

The protein resides in the secreted. It carries out the reaction Endohydrolysis of (1-&gt;4)-alpha-D-glucosidic linkages in polysaccharides containing three or more (1-&gt;4)-alpha-linked D-glucose units.. This chain is Alpha-amylase A type-1/2 (amy1), found in Aspergillus oryzae (strain ATCC 42149 / RIB 40) (Yellow koji mold).